The primary structure comprises 944 residues: MGPKTLPQLAGKWQVLCMLSLCCWGWVSGQLRYSVVEESEPGTLVGNVAQDLGLKMTDLLSRRLQLGSEENGRYFSLSLMSGALAVNQKIDRESLCGASTSCLLPVQVVTEHPLELIRVEVEILDLNDNSPSFATPEREMRISESAASGARFPLDSAQDPDVGTNTVSFYTLSPNSHFSLNVKTLKDGKPFPELVLEQQLDREAQARHQLVLTAVDGGTPARSGTTLISVIVLDINDNAPTFQSSVLRVGIPENAPIGTLLLRLNATDPDEGTNGQLDYSFGDHTSEAVRNLFGLDPSSGAIHVLGPIDFEESRFYEIHARARDQGQPAMEGHCVIQVDVGDVNDNAPEVLLASLANPVLESTPVGTVVGLFNVRDRDSGRNGEVSLDISPDLPFQIKPSENHYSLLTSQPLDREATSHYIIELLASDAGSPSLHKHLTIRLNISDVNDNAPRFNQQLYTAYILENRPPGSLLCTVAASDPDTGDNARLTYSIVGNQVQGAPASSFVYVNPEDGRIFAQRTFDYELLQMLQIVVGVRDSGSPPLHANTSLHVFVLDENDNAPAVLHPRPDWEHSAPQRLPRSAPPGSLVTKVTAVDADAGHNAWLSYSLLPQSTAPGLFLVSTHTGEVRTARALLEDDSDTQQVVVLVRDNGDPSLSSTATVLLVLEDEDPEEMPKSSDFLIHPPERSDLTLYLIVALATVSLLSLVTFTFLSAKCLQGNADGDGGGGQCCRRQDSPSPDFYKQSSPNLQVSSDGTLKYMEVTLRPTDSQSHCYRTCFSPASDGSDFTFLRPLSVQQPTALALEPDAIRSRSNTLRERSQQAPPNTDWRFSQAQRPGTSGSQNGDDTGTWPNNQFDTEMLQAMILASASEAADGSSTLGGGAGTMGLSARYGPQFTLQHVPDYRQNVYIPGSNATLTNAAGKRDGKAPAGGNGNKKKSGKKEKK.

Positions 1-29 are cleaved as a signal peptide; the sequence is MGPKTLPQLAGKWQVLCMLSLCCWGWVSG. Cadherin domains follow at residues 30 to 133, 134 to 242, 243 to 350, 351 to 454, 455 to 564, and 571 to 677; these read QLRY…SPSF, ATPE…APTF, QSSV…APEV, LLAS…APRF, NQQL…APAV, and WEHS…MPKS. Residues 30–693 are Extracellular-facing; that stretch reads QLRYSVVEES…PPERSDLTLY (664 aa). Asparagine 265, asparagine 443, and asparagine 547 each carry an N-linked (GlcNAc...) asparagine glycan. A helical membrane pass occupies residues 694–714; it reads LIVALATVSLLSLVTFTFLSA. Topologically, residues 715-944 are cytoplasmic; that stretch reads KCLQGNADGD…KKKSGKKEKK (230 aa). Disordered stretches follow at residues 722-747, 812-853, and 914-944; these read DGDGGGGQCCRRQDSPSPDFYKQSSP, SNTL…WPNN, and ATLTNAAGKRDGKAPAGGNGNKKKSGKKEKK. The segment covering 820 to 853 has biased composition (polar residues); the sequence is QQAPPNTDWRFSQAQRPGTSGSQNGDDTGTWPNN. Residues 934–944 are compositionally biased toward basic residues; that stretch reads NKKKSGKKEKK.

It is found in the cell membrane. Potential calcium-dependent cell-adhesion protein. May be involved in the establishment and maintenance of specific neuronal connections in the brain. The sequence is that of Protocadherin gamma-C5 (PCDHGC5) from Homo sapiens (Human).